We begin with the raw amino-acid sequence, 290 residues long: Inner membrane protein YebZ (290 aa).

Over 1-10 (MLAFTWIALR) the chain is Periplasmic. The helical transmembrane segment at 11–31 (FIHFTSLMLVFGFAMYGAWLA) threads the bilayer. Residues 32-49 (PLTIRRLLAKRFLRLQQH) are Cytoplasmic-facing. A helical transmembrane segment spans residues 50–70 (AAVWSLISATAMLAVQGGLMG). Over 71–89 (TGWTDVFSPNIWQAVLQTQ) the chain is Periplasmic. The helical transmembrane segment at 90 to 110 (FGGIWLWQIVLALVTLIVALM) threads the bilayer. The Cytoplasmic segment spans residues 111 to 117 (QPRNMPR). A helical membrane pass occupies residues 118–138 (LLFMLTTAQFILLAGVGHATL). Over 139 to 151 (NEGVTAKIHQTNH) the chain is Periplasmic. A helical membrane pass occupies residues 152-172 (AIHLICAAAWFGGLLPVLWCM). The Cytoplasmic segment spans residues 173-195 (QLIKGRWRHQAIQALMRFSWCGH). Residues 196 to 216 (FAVIGVLASGVLNALLITGFP) traverse the membrane as a helical segment. At 217–222 (PTLTTY) the chain is on the periplasmic side. The chain crosses the membrane as a helical span at residues 223 to 243 (WGQLLLLKAILVMIMVVIALA). Residues 244 to 260 (NRYVLVPRMRQDEDRAA) are Cytoplasmic-facing. The chain crosses the membrane as a helical span at residues 261–281 (PWFVWMTKLEWAIGAVVLVII). Over 282 to 290 (SLLATLEPF) the chain is Periplasmic.

Belongs to the CopD family.

The protein resides in the cell inner membrane. In Escherichia coli (strain K12), this protein is Inner membrane protein YebZ (yebZ).